The primary structure comprises 192 residues: dTTP/UTP pyrophosphatase (192 aa).

The active-site Proton acceptor is aspartate 71.

The protein belongs to the Maf family. YhdE subfamily. The cofactor is a divalent metal cation.

Its subcellular location is the cytoplasm. It carries out the reaction dTTP + H2O = dTMP + diphosphate + H(+). The enzyme catalyses UTP + H2O = UMP + diphosphate + H(+). In terms of biological role, nucleoside triphosphate pyrophosphatase that hydrolyzes dTTP and UTP. May have a dual role in cell division arrest and in preventing the incorporation of modified nucleotides into cellular nucleic acids. The chain is dTTP/UTP pyrophosphatase from Clostridium tetani (strain Massachusetts / E88).